The following is a 315-amino-acid chain: Porphobilinogen deaminase (315 aa).

An S-(dipyrrolylmethanemethyl)cysteine modification is found at Cys-238.

This sequence belongs to the HMBS family. In terms of assembly, monomer. It depends on dipyrromethane as a cofactor.

The catalysed reaction is 4 porphobilinogen + H2O = hydroxymethylbilane + 4 NH4(+). It participates in porphyrin-containing compound metabolism; protoporphyrin-IX biosynthesis; coproporphyrinogen-III from 5-aminolevulinate: step 2/4. Tetrapolymerization of the monopyrrole PBG into the hydroxymethylbilane pre-uroporphyrinogen in several discrete steps. This is Porphobilinogen deaminase from Albidiferax ferrireducens (strain ATCC BAA-621 / DSM 15236 / T118) (Rhodoferax ferrireducens).